The primary structure comprises 606 residues: Elongation factor 4 (606 aa).

A tr-type G domain is found at 11–193 (PHIRNFSIIA…RLVRDVPPPK (183 aa)). GTP-binding positions include 23–28 (DHGKST) and 140–143 (NKMD).

This sequence belongs to the TRAFAC class translation factor GTPase superfamily. Classic translation factor GTPase family. LepA subfamily.

Its subcellular location is the cell inner membrane. It catalyses the reaction GTP + H2O = GDP + phosphate + H(+). Required for accurate and efficient protein synthesis under certain stress conditions. May act as a fidelity factor of the translation reaction, by catalyzing a one-codon backward translocation of tRNAs on improperly translocated ribosomes. Back-translocation proceeds from a post-translocation (POST) complex to a pre-translocation (PRE) complex, thus giving elongation factor G a second chance to translocate the tRNAs correctly. Binds to ribosomes in a GTP-dependent manner. The chain is Elongation factor 4 from Chromohalobacter salexigens (strain ATCC BAA-138 / DSM 3043 / CIP 106854 / NCIMB 13768 / 1H11).